Consider the following 206-residue polypeptide: Protein MIS12 homolog (206 aa).

The stretch at 102–206 (DKCQETNPFS…EKESRRLETQ (105 aa)) forms a coiled coil.

It belongs to the mis12 family. Component of the MIS12 complex composed of MIS12, DSN1, NSL1 and PMF1. Also interacts with KNL1, CBX3, CBX5, NDC80 and ZWINT.

The protein resides in the chromosome. Its subcellular location is the centromere. It is found in the kinetochore. Part of the MIS12 complex which is required for normal chromosome alignment and segregation and for kinetochore formation during mitosis. Essential for proper kinetochore microtubule attachments. This is Protein MIS12 homolog from Mus musculus (Mouse).